Reading from the N-terminus, the 56-residue chain is Large ribosomal subunit protein bL32 (56 aa).

The interval 1-34 (MAVQQNKPTRSKRGMRRSHDALTTSTVSVDKASG) is disordered.

Belongs to the bacterial ribosomal protein bL32 family.

The protein is Large ribosomal subunit protein bL32 of Sodalis glossinidius (strain morsitans).